We begin with the raw amino-acid sequence, 213 residues long: Peroxiredoxin-5, mitochondrial (213 aa).

Residues 1–51 constitute a mitochondrion transit peptide; it reads MVQLRFCVLGSIAGSVLRASATWTCVAGRAGRKGAGWECGGARSFSSAAVT. Residues 55–213 form the Thioredoxin domain; sequence IKVGDTIPSV…SLAPNILSQL (159 aa). Lys-74 carries the post-translational modification N6-acetyllysine. Lys-82 is subject to N6-acetyllysine; alternate. Lys-82 carries the N6-succinyllysine; alternate modification. Cys-99 serves as the catalytic Cysteine sulfenic acid (-SOH) intermediate. The S-palmitoyl cysteine moiety is linked to residue Cys-99. Cysteines 99 and 203 form a disulfide. Position 115 is an N6-succinyllysine (Lys-115). Ser-170 and Ser-181 each carry phosphoserine. The short motif at 211-213 is the Microbody targeting signal element; the sequence is SQL.

This sequence belongs to the peroxiredoxin family. Prx5 subfamily. As to quaternary structure, monomer. In terms of processing, S-palmitoylated. Palmitoylation occurs on the active site, inhibiting its reactivity; therefore PRDX5 palmitoylation status determines its antioxidant capacity. S-palmitoylated. Depalmitoylated by ABHD10.

It is found in the mitochondrion. Its subcellular location is the cytoplasm. It localises to the peroxisome matrix. It catalyses the reaction a hydroperoxide + [thioredoxin]-dithiol = an alcohol + [thioredoxin]-disulfide + H2O. Thiol-specific peroxidase that catalyzes the reduction of hydrogen peroxide and organic hydroperoxides to water and alcohols, respectively. Plays a role in cell protection against oxidative stress by detoxifying peroxides and as sensor of hydrogen peroxide-mediated signaling events. This is Peroxiredoxin-5, mitochondrial from Rattus norvegicus (Rat).